The primary structure comprises 224 residues: MWDSLIVSINDTHKLGLEDCLAVFGHVPITKAVKHVRLTEIDTQTSTFTLKFLHTETGQNIEKIIYFIDNDTGNDTRTATGIKQIFNKMFRIAAEKRKLSLIQIDTVEYPCTLVDLLILVGVALPPLCYLYRPALHAIFFLVPNPVGSTLEAWLDSDLVLRLIIVAEFLTHALETLIFVVPRLKYYRVPGEFVPEWLLLGLLEGYGPARRLDTKARTLGEGSVN.

N-linked (GlcNAc...) asparagine glycans are attached at residues N10, N70, and N74.

Its subcellular location is the endoplasmic reticulum. This is an uncharacterized protein from Saccharomyces cerevisiae (strain ATCC 204508 / S288c) (Baker's yeast).